A 315-amino-acid chain; its full sequence is DNA-directed RNA polymerase subunit alpha (315 aa).

The tract at residues 1–228 (MLEIEKPIIE…EHFKLFMSLT (228 aa)) is alpha N-terminal domain (alpha-NTD). The tract at residues 245-315 (KEKVLEMTVE…LGLCLKLNDE (71 aa)) is alpha C-terminal domain (alpha-CTD).

Belongs to the RNA polymerase alpha chain family. As to quaternary structure, homodimer. The RNAP catalytic core consists of 2 alpha, 1 beta, 1 beta' and 1 omega subunit. When a sigma factor is associated with the core the holoenzyme is formed, which can initiate transcription.

The enzyme catalyses RNA(n) + a ribonucleoside 5'-triphosphate = RNA(n+1) + diphosphate. Functionally, DNA-dependent RNA polymerase catalyzes the transcription of DNA into RNA using the four ribonucleoside triphosphates as substrates. This is DNA-directed RNA polymerase subunit alpha from Clostridium botulinum (strain Alaska E43 / Type E3).